Consider the following 648-residue polypeptide: Mitochondrial Rho GTPase 1 (648 aa).

The Cytoplasmic segment spans residues 1 to 619; it reads MARYAAGAVD…KHYNRLINRS (619 aa). At S14 the chain carries Phosphoserine. The 168-residue stretch at 15-182 folds into the Miro 1 domain; it reads PKSVRIVVVG…FYYAQKTVLH (168 aa). 2 consecutive EF-hand domains span residues 198-233 and 319-354; these read RCVR…CFHA and AAID…APES. Positions 211, 213, 215, 222, 332, 334, 336, 338, and 343 each coordinate Ca(2+). In terms of domain architecture, Miro 2 spans 427–595; the sequence is RKVFQCFVFG…FRKILTAAQH (169 aa). The helical transmembrane segment at 620 to 640 threads the bilayer; it reads LMAVSIGAAAVVVGLAAYRVY. Residues 641–648 lie on the Mitochondrial intermembrane side of the membrane; it reads ATRKSSSA.

It belongs to the mitochondrial Rho GTPase family. In terms of tissue distribution, expressed in roots, leaves, stems, flowers and siliques.

The protein localises to the mitochondrion outer membrane. Functionally, mitochondrial GTPase required to maintain proper development, morphology and intracellular distribution of mitochondria, which in turn are essential for the progress of embryonic cell division, development of haploid male and female gametes, and pollen tube growth. The chain is Mitochondrial Rho GTPase 1 from Arabidopsis thaliana (Mouse-ear cress).